Reading from the N-terminus, the 383-residue chain is Caspase a (383 aa).

Positions 1-142 (MAKSIKDHLQ…ETYEIKDKSV (142 aa)) are excised as a propeptide. Positions 8–81 (HLQDALSNIG…RGIKCNAVAE (74 aa)) constitute a Pyrin domain. The interval 87 to 106 (TGQGGVSQPEPPVPEPIPKD) is disordered. Active-site residues include histidine 220 and cysteine 270. The propeptide occupies 275–296 (HGRVWASDGEPDEPIEIEDDDF).

The protein belongs to the peptidase C14A family. In terms of assembly, heterotetramer that consists of two anti-parallel arranged heterodimers, each one formed by a 20 kDa (p20) and a 10 kDa (p10) subunit. Interacts (via pyrin domain) with pycard (via pyrin domain). Interacts with caspb. Component of NLRP1 inflammasomes. Inflammasomes are supramolecular complexes that assemble in the cytosol in response to pathogens and other damage-associated signals and play critical roles in innate immunity and inflammation. The NLRP1 inflammasome is composed of the signal sensor nlrp1, and the adapter pycard (asc), which recruit effector pro-inflammatory caspases caspa and/or caspb. The interaction between nlrp1 and pycard is required for the sequential recruitment of caspa and then caspb. Caspa is preferentially recruited first and this causes the cleavage of pro-il1b into the midformed il1b. This is followed by the recruitment of caspb, which is activated and cleaves the midformed il1b resulting in il1b maturation. Interacts with caiap. In terms of processing, the two subunits are derived from the precursor sequence by an autocatalytic mechanism.

Its subcellular location is the inflammasome. The protein resides in the cytoplasm. It catalyses the reaction Strict requirement for an Asp residue at position P1 and has a preferred cleavage sequence of Tyr-Val-Ala-Asp-|-.. Thiol protease which cleaves IL-1 beta (il1b), releasing the mature cytokine which is involved in a variety of inflammatory processes, and mediates apoptosis. Component of the NLRP1 inflammasome, which plays a crucial role in innate immunity and inflammation. In response to pathogens and other damage-associated signals, recruited to the NLRP1 inflammasome in its precursor form. Its subsequent activation causes the cleavage of pro-il1b into the midformed il1b, which then evetually leads to il1b maturation and secretion in the extracellular milieu. Required for the development of the cartilaginous pharyngeal skeleton. In Danio rerio (Zebrafish), this protein is Caspase a.